A 158-amino-acid chain; its full sequence is Putative metalloproteinase inhibitor tag-225 (158 aa).

A signal peptide spans 1–20 (MQNLSLSLVILSVLIAVTLA). C21 is a Zn(2+) binding site. Residues 21 to 25 (CKCRE) form an involved in metalloproteinase-binding region. Intrachain disulfides connect C21/C96, C23/C123, and C33/C158. The region spanning 21 to 158 (CKCREQSTKE…LQSQVKSIKC (138 aa)) is the NTR domain. N-linked (GlcNAc...) asparagine glycosylation occurs at N79. Residues 93-94 (AP) are involved in metalloproteinase-binding.

Belongs to the protease inhibitor I35 (TIMP) family.

It is found in the secreted. Complexes with metalloproteinases and irreversibly inactivates them by binding to their catalytic zinc cofactor. The sequence is that of Putative metalloproteinase inhibitor tag-225 (tag-225) from Caenorhabditis elegans.